A 214-amino-acid polypeptide reads, in one-letter code: MDPCSSLFSYVFMHLFVLCLQAQVTVQSPPNFTQHVREQSLVTDQLSRRLVRTYQLYSRTSGKHVQILDNKKINAMAEDGDVHAKLIVETDTFGSRVRIKGAATGFYICMNKKGKLIGKSNGKGKDCVFTEIVLENNYTALQNAKYEGWYMAFTRKGRPRKGSKTRQHQREVHFMKRLPKGHQTTEPHRRFEFLNYPFNRRSKRTRNSSASLRP.

A signal peptide spans 1 to 22 (MDPCSSLFSYVFMHLFVLCLQA). Residues N31, N137, and N207 are each glycosylated (N-linked (GlcNAc...) asparagine).

This sequence belongs to the heparin-binding growth factors family.

Its subcellular location is the secreted. Plays an important role in the regulation of embryonic development, cell proliferation, cell differentiation and cell migration. Involved in initiation, outgrowth and patterning of the limbs. This Gallus gallus (Chicken) protein is Fibroblast growth factor 8 (FGF8).